We begin with the raw amino-acid sequence, 128 residues long: Small ribosomal subunit protein eS6 (128 aa).

Belongs to the eukaryotic ribosomal protein eS6 family.

The polypeptide is Small ribosomal subunit protein eS6 (Thermoplasma volcanium (strain ATCC 51530 / DSM 4299 / JCM 9571 / NBRC 15438 / GSS1)).